Here is a 26-residue protein sequence, read N- to C-terminus: Conotoxin Eb6.15 (26 aa).

Disulfide bonds link cysteine 7–cysteine 18 and cysteine 13–cysteine 25.

Belongs to the conotoxin O1 superfamily. In terms of tissue distribution, expressed by the venom duct.

The protein localises to the secreted. The sequence is that of Conotoxin Eb6.15 (E1) from Conus ebraeus (Hebrew cone).